A 385-amino-acid chain; its full sequence is Succinate--CoA ligase [ADP-forming] subunit beta (385 aa).

The ATP-grasp domain maps to 9-244 (KEILRKYGVP…QDEEDPLETR (236 aa)). ATP is bound by residues Lys-46, 53–55 (GRG), Glu-99, Cys-102, and Glu-107. Positions 199 and 213 each coordinate Mg(2+). Residues Asn-264 and 321-323 (GIM) each bind substrate.

The protein belongs to the succinate/malate CoA ligase beta subunit family. Heterotetramer of two alpha and two beta subunits. Mg(2+) is required as a cofactor.

It catalyses the reaction succinate + ATP + CoA = succinyl-CoA + ADP + phosphate. It carries out the reaction GTP + succinate + CoA = succinyl-CoA + GDP + phosphate. It functions in the pathway carbohydrate metabolism; tricarboxylic acid cycle; succinate from succinyl-CoA (ligase route): step 1/1. Its function is as follows. Succinyl-CoA synthetase functions in the citric acid cycle (TCA), coupling the hydrolysis of succinyl-CoA to the synthesis of either ATP or GTP and thus represents the only step of substrate-level phosphorylation in the TCA. The beta subunit provides nucleotide specificity of the enzyme and binds the substrate succinate, while the binding sites for coenzyme A and phosphate are found in the alpha subunit. The polypeptide is Succinate--CoA ligase [ADP-forming] subunit beta (Rickettsia bellii (strain RML369-C)).